A 436-amino-acid polypeptide reads, in one-letter code: Methylenetetrahydrofolate--tRNA-(uracil-5-)-methyltransferase TrmFO (436 aa).

9–14 (GAGLAG) provides a ligand contact to FAD.

This sequence belongs to the MnmG family. TrmFO subfamily. Requires FAD as cofactor.

The protein localises to the cytoplasm. The catalysed reaction is uridine(54) in tRNA + (6R)-5,10-methylene-5,6,7,8-tetrahydrofolate + NADH + H(+) = 5-methyluridine(54) in tRNA + (6S)-5,6,7,8-tetrahydrofolate + NAD(+). It carries out the reaction uridine(54) in tRNA + (6R)-5,10-methylene-5,6,7,8-tetrahydrofolate + NADPH + H(+) = 5-methyluridine(54) in tRNA + (6S)-5,6,7,8-tetrahydrofolate + NADP(+). Its function is as follows. Catalyzes the folate-dependent formation of 5-methyl-uridine at position 54 (M-5-U54) in all tRNAs. The polypeptide is Methylenetetrahydrofolate--tRNA-(uracil-5-)-methyltransferase TrmFO (Acetivibrio thermocellus (strain ATCC 27405 / DSM 1237 / JCM 9322 / NBRC 103400 / NCIMB 10682 / NRRL B-4536 / VPI 7372) (Clostridium thermocellum)).